The following is a 763-amino-acid chain: ATP-dependent RNA helicase SUPV3L1, mitochondrial (763 aa).

The transit peptide at 1-65 (MSVNRCIYLL…RPLDTSLFIP (65 aa)) directs the protein to the mitochondrion. The disordered stretch occupies residues 39 to 58 (RRTFDKLSTRHSSSGSSRPL). A Helicase ATP-binding domain is found at 192–332 (EARAIQRKIV…AVDFITELMF (141 aa)). 205-212 (GPTNSGKT) is an ATP binding site. Residues 354–519 (HAVESLDNLK…PTAEQIEMFA (166 aa)) enclose the Helicase C-terminal domain. 2 disordered regions span residues 679–721 (DSQP…KSSL) and 742–763 (EWAREQNEDNSIPVNNGKRKKK). The span at 680-697 (SQPTDTESNSSSTVPESE) shows a compositional bias: polar residues.

Belongs to the helicase family. Requires Mg(2+) as cofactor. It depends on Mn(2+) as a cofactor.

It localises to the nucleus. It is found in the mitochondrion matrix. The protein resides in the mitochondrion nucleoid. The enzyme catalyses ATP + H2O = ADP + phosphate + H(+). In terms of biological role, major helicase player in mitochondrial RNA metabolism. Component of the mitochondrial degradosome (mtEXO) complex, that degrades 3' overhang double-stranded RNA with a 3'-to-5' directionality in an ATP-dependent manner. ATPase and ATP-dependent multisubstrate helicase, able to unwind double-stranded (ds) DNA and RNA, and RNA/DNA heteroduplexes in the 5'-to-3' direction. Plays a role in the RNA surveillance system in mitochondria; regulates the stability of mature mRNAs, the removal of aberrantly formed mRNAs and the rapid degradation of non coding processing intermediates. Also implicated in recombination and chromatin maintenance pathways. May protect cells from apoptosis. Associates with mitochondrial DNA. This is ATP-dependent RNA helicase SUPV3L1, mitochondrial (supv3l1) from Danio rerio (Zebrafish).